The primary structure comprises 468 residues: 3-isopropylmalate dehydratase large subunit (468 aa).

Residues 53-74 (QPSKTVATMDHNVPTDSRDLAG) form a disordered region. 3 residues coordinate [4Fe-4S] cluster: C347, C407, and C410.

The protein belongs to the aconitase/IPM isomerase family. LeuC type 1 subfamily. As to quaternary structure, heterodimer of LeuC and LeuD. The cofactor is [4Fe-4S] cluster.

The catalysed reaction is (2R,3S)-3-isopropylmalate = (2S)-2-isopropylmalate. It participates in amino-acid biosynthesis; L-leucine biosynthesis; L-leucine from 3-methyl-2-oxobutanoate: step 2/4. In terms of biological role, catalyzes the isomerization between 2-isopropylmalate and 3-isopropylmalate, via the formation of 2-isopropylmaleate. This chain is 3-isopropylmalate dehydratase large subunit, found in Pasteurella multocida (strain Pm70).